The chain runs to 178 residues: Probetacellulin (178 aa).

A signal peptide spans 1-31 (MARAAPGSGASPLPLLPALALGLVILHCVVA). Residues 32 to 118 (DGNSTRSPED…LFYLRGDRGQ (87 aa)) are Extracellular-facing. Asn34 is a glycosylation site (N-linked (GlcNAc...) asparagine). The 41-residue stretch at 65-105 (HFSRCPKQYKHYCIKGRCRFVVAEQTPSCVCDEGYAGARCE) folds into the EGF-like domain. Disulfide bonds link Cys69–Cys82, Cys77–Cys93, and Cys95–Cys104. A propeptide spans 112-178 (LRGDRGQILV…NDDIQETSIA (67 aa)) (removed in mature form). The helical transmembrane segment at 119-139 (ILVICLIAVMVIFIILVVSIC) threads the bilayer. Over 140–178 (TCCHPLRKRRKRRKKEEEMETLGKDITPINDDIQETSIA) the chain is Cytoplasmic.

In terms of assembly, monomer. Interacts with EGFR and ERBB4. Expressed in a wide range of tissues, including the mammary gland.

The protein localises to the secreted. Its subcellular location is the extracellular space. It is found in the cell membrane. Growth factor that binds to EGFR, ERBB4 and other EGF receptor family members. Potent mitogen for retinal pigment epithelial cells and vascular smooth muscle cells. The protein is Probetacellulin (BTC) of Bos taurus (Bovine).